A 130-amino-acid chain; its full sequence is Small ribosomal subunit protein uS9 (130 aa).

Belongs to the universal ribosomal protein uS9 family.

The protein is Small ribosomal subunit protein uS9 of Streptococcus thermophilus (strain CNRZ 1066).